The sequence spans 142 residues: uncharacterized protein (142 aa).

The N-acetyltransferase domain maps to 1 to 120; the sequence is MADKFDANDE…TILKWEKNMD (120 aa).

Belongs to the acetyltransferase family.

This is an uncharacterized protein from Streptococcus pyogenes serotype M1.